An 813-amino-acid polypeptide reads, in one-letter code: Tax1-binding protein 1 homolog (813 aa).

3 positions are modified to phosphoserine: serine 124, serine 138, and serine 225. Residues 144–596 adopt a coiled-coil conformation; that stretch reads TTKAGLLELK…SYSLQLAEKD (453 aa). Residues 320-420 form an oligomerization region; the sequence is EEIGKLQSCL…ELQLHAVKTD (101 aa). The residue at position 618 (serine 618) is a Phosphoserine; by IKKA. Serine 631 is subject to Phosphoserine. The interval 667 to 732 is disordered; it reads AHETRDGADG…NVPIPPDPAN (66 aa). Serine 692 is modified (phosphoserine; by IKKA). 2 consecutive UBZ1-type zinc fingers follow at residues 751-777 and 778-804; these read HKKC…VESH and WKVC…VQTH. Residues cysteine 754, cysteine 757, histidine 773, histidine 777, cysteine 781, cysteine 784, histidine 800, and histidine 804 each coordinate Zn(2+).

Homooligomer. Interacts with TNFAIP3. Interacts with STARD13. Interacts with MYO6. Interacts with TOM1; the interaction is indirect and is mediated by MYO6, which acts as a bridge between TOM1 and TAX1BP1. Interacts with MAVS; this interaction induces MAVS polyubiquitination. Interacts with TNIP1. Interacts with TRAF6; this interaction mediates deubiquitination of TRAF6 and inhibition of NF-kappa-B activation. Interacts with RIPK1; this interaction negatively regulates RIPK1 ubiquitination. Interacts with NBR1. Interacts with TBK1. Interacts with RB1CC1. Interacts with SQSTM1. Interacts with AZI2. Interacts with TICAM1 and TRIM32; these interactions target TICAM1 to TAX1BP1-mediated selective autophagic degradation. Phosphorylated in the C-terminal region by CHUK/IKKA leading to NF-kappa-B signaling down-regulation.

The protein localises to the cytoplasm. Its subcellular location is the mitochondrion. The protein resides in the preautophagosomal structure. It is found in the cytoplasmic vesicle. It localises to the autophagosome. Its function is as follows. Ubiquitin-binding adapter that participates in inflammatory, antiviral and innate immune processes as well as selective autophagy regulation. Plays a key role in the negative regulation of NF-kappa-B and IRF3 signalings by acting as an adapter for the ubiquitin-editing enzyme A20/TNFAIP3 to bind and inactivate its substrates. Disrupts the interactions between the E3 ubiquitin ligase TRAF3 and TBK1/IKBKE to attenuate 'Lys63'-linked polyubiquitination of TBK1 and thereby IFN-beta production. Also recruits A20/TNFAIP3 to ubiquitinated signaling proteins TRAF6 and RIPK1, leading to their deubiquitination and disruption of IL-1 and TNF-induced NF-kappa-B signaling pathways. Inhibits virus-induced apoptosis by inducing the 'Lys-48'-linked polyubiquitination and degradation of MAVS via recruitment of the E3 ligase ITCH, thereby attenuating MAVS-mediated apoptosis signaling. As a macroautophagy/autophagy receptor, facilitates the xenophagic clearance of pathogenic bacteria such as Salmonella typhimurium and Mycobacterium tuberculosis. Upon NBR1 recruitment to the SQSTM1-ubiquitin condensates, acts as the major recruiter of RB1CC1 to these ubiquitin condensates to promote their autophagic degradation. Mediates the autophagic degradation of other substrates including TICAM1. The sequence is that of Tax1-binding protein 1 homolog (Tax1bp1) from Rattus norvegicus (Rat).